The sequence spans 338 residues: Ketol-acid reductoisomerase (NADP(+)) (338 aa).

The 181-residue stretch at 1-181 (MNVFYDKDAD…GGGRAGIIET (181 aa)) folds into the KARI N-terminal Rossmann domain. Residues 24–27 (YGSQ), arginine 47, and serine 52 each bind NADP(+). Histidine 107 is an active-site residue. Glycine 133 serves as a coordination point for NADP(+). The KARI C-terminal knotted domain occupies 182–327 (NFREETETDL…AKLRAMMPWI (146 aa)). Residues aspartate 190, glutamate 194, glutamate 226, and glutamate 230 each contribute to the Mg(2+) site. A substrate-binding site is contributed by serine 251.

Belongs to the ketol-acid reductoisomerase family. Requires Mg(2+) as cofactor.

The enzyme catalyses (2R)-2,3-dihydroxy-3-methylbutanoate + NADP(+) = (2S)-2-acetolactate + NADPH + H(+). It catalyses the reaction (2R,3R)-2,3-dihydroxy-3-methylpentanoate + NADP(+) = (S)-2-ethyl-2-hydroxy-3-oxobutanoate + NADPH + H(+). Its pathway is amino-acid biosynthesis; L-isoleucine biosynthesis; L-isoleucine from 2-oxobutanoate: step 2/4. The protein operates within amino-acid biosynthesis; L-valine biosynthesis; L-valine from pyruvate: step 2/4. Involved in the biosynthesis of branched-chain amino acids (BCAA). Catalyzes an alkyl-migration followed by a ketol-acid reduction of (S)-2-acetolactate (S2AL) to yield (R)-2,3-dihydroxy-isovalerate. In the isomerase reaction, S2AL is rearranged via a Mg-dependent methyl migration to produce 3-hydroxy-3-methyl-2-ketobutyrate (HMKB). In the reductase reaction, this 2-ketoacid undergoes a metal-dependent reduction by NADPH to yield (R)-2,3-dihydroxy-isovalerate. The sequence is that of Ketol-acid reductoisomerase (NADP(+)) from Burkholderia cenocepacia (strain HI2424).